Consider the following 93-residue polypeptide: Co-chaperonin GroES (93 aa).

The protein belongs to the GroES chaperonin family. As to quaternary structure, heptamer of 7 subunits arranged in a ring. Interacts with the chaperonin GroEL.

Its subcellular location is the cytoplasm. Its function is as follows. Together with the chaperonin GroEL, plays an essential role in assisting protein folding. The GroEL-GroES system forms a nano-cage that allows encapsulation of the non-native substrate proteins and provides a physical environment optimized to promote and accelerate protein folding. GroES binds to the apical surface of the GroEL ring, thereby capping the opening of the GroEL channel. This chain is Co-chaperonin GroES, found in Lacticaseibacillus paracasei (strain ATCC 334 / BCRC 17002 / CCUG 31169 / CIP 107868 / KCTC 3260 / NRRL B-441) (Lactobacillus paracasei).